A 97-amino-acid polypeptide reads, in one-letter code: uncharacterized protein (97 aa).

Residues 1 to 21 form the signal peptide; sequence MLLHGLGRMNIIFICFPSLAC.

This is an uncharacterized protein from Schizosaccharomyces pombe (strain 972 / ATCC 24843) (Fission yeast).